A 452-amino-acid chain; its full sequence is Multifunctional glycoside hydrolase (452 aa).

Positions 17, 118, and 162 each coordinate substrate. Residue E163 is the Proton donor of the active site. A substrate-binding site is contributed by Y303. E361 functions as the Nucleophile in the catalytic mechanism. Substrate is bound by residues W407 and 414-415 (EW).

The protein belongs to the glycosyl hydrolase 1 family. As to quaternary structure, monomer. Homotrimer.

It carries out the reaction Hydrolysis of terminal, non-reducing beta-D-glucosyl residues with release of beta-D-glucose.. The enzyme catalyses Hydrolysis of terminal non-reducing beta-D-galactose residues in beta-D-galactosides.. It catalyses the reaction Hydrolysis of (1-&gt;4)-beta-D-xylans, to remove successive D-xylose residues from the non-reducing termini.. The catalysed reaction is Hydrolysis of (1-&gt;4)-linkages in (1-&gt;4)-beta-D-glucans, to remove successive glucose units.. It carries out the reaction Hydrolysis of (1-&gt;4)-beta-D-glucosidic linkages in cellulose and cellotetraose, releasing cellobiose from the non-reducing ends of the chains.. It participates in glycan metabolism; beta-D-glucan degradation. The protein operates within glycan metabolism; cellulose degradation. Its activity is regulated as follows. Slight activation by Mn(2+), Ni(2+) and K(+). Slight inhibition by Fe(3+), Zn(2+), Co(2+), Mg(2+), Cu(2+), Na(+) and NH4(+). In terms of biological role, has high beta-D-glucosidase, exoglucanase, beta-D-xylosidase, beta-D-galactosidase, and transgalactosylation activities in vitro. Has a very broad substrate specificity with the highest activity with p-nitrophenyl beta-D-galactopyranoside (pNPGal) as substrate. Active with pNP-beta-D-glucopyranoside (pNPGlu), pNP-beta-D-cellobioside (pNPC), lactose, pNP-beta-D-xylopyranoside (pNPX) and cellobiose in the order of decreasing activity, respectively. Very low activity with soluble polysaccharides synanthrin and locust bean gum. Very low, but detectable activity with insoluble substrates such as cotton and filter paper. No activity with pNP-alpha-L-arabinofuranoside (pNPAr) or carboxymethylcellulose (CMC) as substrates. Synthesizes galactooligosaccharides (GalOS) from lactose. Hydrolyzes pretreated corn stover releasing both glucose and xylose. This multifunctional enzyme may provide C.owensensis the benefit of utilizing a wide variety of available carbon sources in its natural growing environment as the ability to convert a wide range of soluble oligosaccharides to monoses is required in order to assimilate them. This chain is Multifunctional glycoside hydrolase, found in Caldicellulosiruptor owensensis (strain ATCC 700167 / DSM 13100 / OL).